The sequence spans 69 residues: Large ribosomal subunit protein uL29 (69 aa).

It belongs to the universal ribosomal protein uL29 family.

The chain is Large ribosomal subunit protein uL29 from Lachnoclostridium phytofermentans (strain ATCC 700394 / DSM 18823 / ISDg) (Clostridium phytofermentans).